Reading from the N-terminus, the 796-residue chain is Peroxisome proliferator-activated receptor gamma coactivator 1-alpha (796 aa).

Residue K77 is modified to N6-acetyllysine. The tract at residues 98-138 (PVDEDGLPSFDALTDGDVTTENEASPSSMPDGTPPPQEAEE) is disordered. A compositionally biased stretch (polar residues) spans 114–127 (DVTTENEASPSSMP). Residues 142–146 (LKKLL) carry the LXXLL motif motif. K144 is modified (N6-acetyllysine). T176 bears the Phosphothreonine; by AMPK mark. K182 is modified (N6-acetyllysine). The tract at residues 211-274 (YLTTNDDPPH…PNDPKGSPFE (64 aa)) is disordered. A compositionally biased stretch (basic and acidic residues) spans 217–235 (DPPHTKPTETRNSSRDKCT). Residues 242 to 258 (TQSQSQHLQAKPTSLSL) show a composition bias toward polar residues. An N6-acetyllysine mark is found at K252, K269, K276, and K319. The segment at 288 to 349 (GTAGLTPPTT…NNSTKKGPEQ (62 aa)) is disordered. The interval 291–337 (GLTPPTTPPHKANQDNPFRASPKLKPPCKTVVPPPSKKTRYSESSGT) is interaction with PPARG. The span at 332–344 (SESSGTHGNNSTK) shows a compositional bias: polar residues. N6-acetyllysine occurs at positions 345, 411, and 449. Residues 348–796 (EQSELYAQLS…LKEAQRSLRR (449 aa)) form a mediates interaction with RNF34 region. The segment at 463–487 (HFGHPSQAVFDDEADKTSELRDSDF) is disordered. A compositionally biased stretch (basic and acidic residues) spans 477–486 (DKTSELRDSD). S537 carries the post-translational modification Phosphoserine; by AMPK. 2 disordered regions span residues 541 to 637 (FNSP…SYEE) and 648 to 667 (YRREYEKRESERAKQRERQR). Residues 568-603 (RSFSQHRSCSRSPYSRSRSRSPGSRSSSRSCYYSES) are compositionally biased toward low complexity. The segment covering 620 to 629 (SRSRSPYSRR) has biased composition (basic residues). One can recognise an RRM domain in the interval 675-751 (RVIYVGKIRP…TDFELYFCGR (77 aa)). An N6-acetyllysine mark is found at K756 and K777.

Homooligomer. Interacts with MYBBP1A; inhibits MYBBP1A transcriptional activation. Interacts with PRDM16, LPIN1 and PML. Interacts (via LXXLL motif) with RORA and RORC (via AF-2 motif); activates RORA and RORC transcriptional activation. Interacts with LRPPRC. Interacts with FOXO1. Interacts with NR5A2. Post-translationally, phosphorylation by AMPK in skeletal muscle increases activation of its own promoter. Phosphorylated by CLK2. Heavily acetylated by KAT2A/GCN5 under conditions of high nutrients, leading to inactivation of PPARGC1A. Deacetylated by SIRT1 in low nutrients/high NAD conditions, leading to its activation. In terms of processing, ubiquitinated. Ubiquitination by RNF34 induces proteasomal degradation.

It localises to the nucleus. It is found in the PML body. Transcriptional coactivator for steroid receptors and nuclear receptors. Greatly increases the transcriptional activity of PPARG and thyroid hormone receptor on the uncoupling protein promoter. Can regulate key mitochondrial genes that contribute to the program of adaptive thermogenesis. Plays an essential role in metabolic reprogramming in response to dietary availability through coordination of the expression of a wide array of genes involved in glucose and fatty acid metabolism. Acts as a key regulator of gluconeogenesis: stimulates hepatic gluconeogenesis by increasing the expression of gluconeogenic enzymes, and acting together with FOXO1 to promote the fasting gluconeogenic program. Induces the expression of PERM1 in the skeletal muscle in an ESRRA-dependent manner. Also involved in the integration of the circadian rhythms and energy metabolism. Required for oscillatory expression of clock genes, such as BMAL1 and NR1D1, through the coactivation of RORA and RORC, and metabolic genes, such as PDK4 and PEPCK. The protein is Peroxisome proliferator-activated receptor gamma coactivator 1-alpha (PPARGC1A) of Sus scrofa (Pig).